The sequence spans 660 residues: Sodium/nucleoside cotransporter 2 (660 aa).

Ser-46 carries the post-translational modification Phosphoserine. 14 helical membrane passes run 82–102 (ILLG…CILN), 106–125 (ALAL…CHFL), 150–168 (KRVF…LALD), 174–194 (EQLI…ACSK), 202–222 (RTVF…IRTE), 235–255 (IQIF…DTLV), 262–282 (QSLP…YLGL), 297–316 (TMGT…FVGM), 338–357 (VMTG…FISF), 364–383 (LISA…KLVY), 425–445 (VAAN…TLSW), 456–476 (SFQV…GVQW), 531–551 (TTFS…LGGL), and 569–589 (ALFT…ILYV).

The protein belongs to the concentrative nucleoside transporter (CNT) (TC 2.A.41) family.

The protein resides in the membrane. It localises to the apicolateral cell membrane. It catalyses the reaction adenosine(out) + Na(+)(out) = adenosine(in) + Na(+)(in). The enzyme catalyses inosine(out) + Na(+)(out) = inosine(in) + Na(+)(in). It carries out the reaction guanosine(out) + Na(+)(out) = guanosine(in) + Na(+)(in). The catalysed reaction is uridine(out) + Na(+)(out) = uridine(in) + Na(+)(in). Sodium-dependent and purine-selective transporter. Exhibits the transport characteristics of the nucleoside transport system cif or N1 subtype (N1/cif) (selective for purine nucleosides and uridine). Plays a critical role in specific uptake and salvage of purine nucleosides in kidney and other tissues. May contribute to regulate the transport of organic compounds in testes across the blood-testis-barrier. In Mus musculus (Mouse), this protein is Sodium/nucleoside cotransporter 2 (Slc28a2).